The following is a 592-amino-acid chain: Protein US23 (592 aa).

The disordered stretch occupies residues Pro407–Arg491. Acidic residues predominate over residues Ala460–Glu481.

The protein belongs to the herpesviridae US22 family.

The protein localises to the virion tegument. In Homo sapiens (Human), this protein is Protein US23 (US23).